The sequence spans 174 residues: Ly6/PLAUR domain-containing protein 6 (174 aa).

An N-terminal signal peptide occupies residues 1–22; sequence MEPWPLMAWGLMLTAITGWIKA. A UPAR/Ly6 domain is found at 47–141; the sequence is FKCFTCEDAP…PRNETDAIFS (95 aa). 6 disulfide bridges follow: Cys49–Cys77, Cys52–Cys61, Cys70–Cys96, Cys102–Cys121, Cys107–Cys118, and Cys122–Cys127. N-linked (GlcNAc...) asparagine glycosylation is found at Asn134 and Asn147. The GPI-anchor amidated serine moiety is linked to residue Ser149. Residues 150–174 constitute a propeptide, removed in mature form; it reads AQSTQTLPLLLLSVSITSLMLHSIN.

In terms of assembly, interacts with fzd8 and lrp6.

The protein resides in the cell membrane. Its subcellular location is the membrane raft. In terms of biological role, acts as an important regulator of embryogenesis through its enhancement of Wnt/beta-catenin signaling. Positively regulates Wnt/beta-catenin signaling by ensuring phosphorylation of lrp6 specifically in plasma membrane rafts and its subsequent internalization into signaling-competent vesicles. Essential for the wnt8-mediated patterning of the mesoderm and neuroectoderm during gastrulation. The sequence is that of Ly6/PLAUR domain-containing protein 6 (lypd6) from Danio rerio (Zebrafish).